The chain runs to 315 residues: Methionyl-tRNA formyltransferase (315 aa).

113–116 is a binding site for (6S)-5,6,7,8-tetrahydrofolate; the sequence is SLLP.

Belongs to the Fmt family.

It carries out the reaction L-methionyl-tRNA(fMet) + (6R)-10-formyltetrahydrofolate = N-formyl-L-methionyl-tRNA(fMet) + (6S)-5,6,7,8-tetrahydrofolate + H(+). Functionally, attaches a formyl group to the free amino group of methionyl-tRNA(fMet). The formyl group appears to play a dual role in the initiator identity of N-formylmethionyl-tRNA by promoting its recognition by IF2 and preventing the misappropriation of this tRNA by the elongation apparatus. This Escherichia coli O45:K1 (strain S88 / ExPEC) protein is Methionyl-tRNA formyltransferase.